A 98-amino-acid chain; its full sequence is NADH-ubiquinone oxidoreductase chain 4L (98 aa).

3 helical membrane-spanning segments follow: residues 1 to 21, 25 to 45, and 67 to 87; these read MSLV…GLLM, HLMS…ILST, and AACE…TYGV.

This sequence belongs to the complex I subunit 4L family. Core subunit of respiratory chain NADH dehydrogenase (Complex I) which is composed of 45 different subunits.

Its subcellular location is the mitochondrion inner membrane. The catalysed reaction is a ubiquinone + NADH + 5 H(+)(in) = a ubiquinol + NAD(+) + 4 H(+)(out). In terms of biological role, core subunit of the mitochondrial membrane respiratory chain NADH dehydrogenase (Complex I) which catalyzes electron transfer from NADH through the respiratory chain, using ubiquinone as an electron acceptor. Part of the enzyme membrane arm which is embedded in the lipid bilayer and involved in proton translocation. This chain is NADH-ubiquinone oxidoreductase chain 4L (MT-ND4L), found in Talpa europaea (European mole).